The primary structure comprises 440 residues: C4-dicarboxylate TRAP transporter large permease protein DctM (440 aa).

13 helical membrane passes run 4–24 (LIIF…SISL), 54–74 (FEIM…HGGV), 89–109 (WHGG…AVSG), 112–132 (PATV…QGFP), 148–168 (ILIP…GMVV), 181–201 (VGEL…FLAF), 230–250 (AAWG…GIFT), 255–275 (AAMS…DLTL), 291–311 (MLLY…HEGI), 318–338 (WMVN…ILLL), 349–369 (IVLI…IDPV), 370–390 (HFGI…PVGL), and 410–430 (VWPW…VPAI).

Belongs to the TRAP transporter large permease family. In terms of assembly, the complex comprises the extracytoplasmic solute receptor protein DctP, and the two transmembrane proteins DctQ and DctM.

It localises to the cell inner membrane. Part of the tripartite ATP-independent periplasmic (TRAP) transport system DctPQM involved in C4-dicarboxylates uptake. The protein is C4-dicarboxylate TRAP transporter large permease protein DctM of Rhodobacter capsulatus (Rhodopseudomonas capsulata).